A 426-amino-acid chain; its full sequence is Glutamate-1-semialdehyde 2,1-aminomutase (426 aa).

Residue Lys266 is modified to N6-(pyridoxal phosphate)lysine.

The protein belongs to the class-III pyridoxal-phosphate-dependent aminotransferase family. HemL subfamily. The cofactor is pyridoxal 5'-phosphate.

The protein localises to the cytoplasm. The enzyme catalyses (S)-4-amino-5-oxopentanoate = 5-aminolevulinate. The protein operates within porphyrin-containing compound metabolism; protoporphyrin-IX biosynthesis; 5-aminolevulinate from L-glutamyl-tRNA(Glu): step 2/2. This is Glutamate-1-semialdehyde 2,1-aminomutase (hemL) from Methanocaldococcus jannaschii (strain ATCC 43067 / DSM 2661 / JAL-1 / JCM 10045 / NBRC 100440) (Methanococcus jannaschii).